The sequence spans 66 residues: Cold shock protein CspB (66 aa).

Positions 4 to 63 (GKVKWFNNEKGYGFIEVEGGSDVFVHFTAIQGEGFKSLEEGQEVSFEIVQGNRGPQAANV) constitute a CSD domain.

As to quaternary structure, homodimer.

It localises to the cytoplasm. Functionally, affects cell viability at low temperatures. The polypeptide is Cold shock protein CspB (cspB) (Geobacillus stearothermophilus (Bacillus stearothermophilus)).